Reading from the N-terminus, the 274-residue chain is CTO1 family protein C17G9.12c (274 aa).

It belongs to the CTO1 family.

It is found in the cytoplasm. Its subcellular location is the nucleus. The polypeptide is CTO1 family protein C17G9.12c (Schizosaccharomyces pombe (strain 972 / ATCC 24843) (Fission yeast)).